Reading from the N-terminus, the 227-residue chain is Lipoprotein-releasing system ATP-binding protein LolD (227 aa).

Positions 7-227 (LQLTGVERHY…TISDGKIVDF (221 aa)) constitute an ABC transporter domain. 43-50 (APSGTGKS) lines the ATP pocket.

The protein belongs to the ABC transporter superfamily. Lipoprotein translocase (TC 3.A.1.125) family. The complex is composed of two ATP-binding proteins (LolD) and two transmembrane proteins (LolC and LolE).

It is found in the cell inner membrane. Functionally, part of the ABC transporter complex LolCDE involved in the translocation of mature outer membrane-directed lipoproteins, from the inner membrane to the periplasmic chaperone, LolA. Responsible for the formation of the LolA-lipoprotein complex in an ATP-dependent manner. The protein is Lipoprotein-releasing system ATP-binding protein LolD of Rhizobium johnstonii (strain DSM 114642 / LMG 32736 / 3841) (Rhizobium leguminosarum bv. viciae).